A 60-amino-acid chain; its full sequence is UPF0434 protein YPA_0693 (60 aa).

The protein belongs to the UPF0434 family.

This is UPF0434 protein YPA_0693 from Yersinia pestis bv. Antiqua (strain Antiqua).